We begin with the raw amino-acid sequence, 126 residues long: Glycine cleavage system H protein (126 aa).

Positions 22-104 (KLRIGITDFA…YEKAWMIVIE (83 aa)) constitute a Lipoyl-binding domain. Residue Lys63 is modified to N6-lipoyllysine.

This sequence belongs to the GcvH family. In terms of assembly, the glycine cleavage system is composed of four proteins: P, T, L and H. It depends on (R)-lipoate as a cofactor.

In terms of biological role, the glycine cleavage system catalyzes the degradation of glycine. The H protein shuttles the methylamine group of glycine from the P protein to the T protein. Its function is as follows. Is also involved in protein lipoylation via its role as an octanoyl/lipoyl carrier protein intermediate. This is Glycine cleavage system H protein from Oceanobacillus iheyensis (strain DSM 14371 / CIP 107618 / JCM 11309 / KCTC 3954 / HTE831).